Reading from the N-terminus, the 186-residue chain is Holliday junction branch migration complex subunit RuvA (186 aa).

The interval Met-1–Phe-63 is domain I. A domain II region spans residues Asn-64–Ser-137. Position 137 (Ser-137) is a region of interest, flexible linker. A domain III region spans residues Ser-137 to Asn-186.

This sequence belongs to the RuvA family. Homotetramer. Forms an RuvA(8)-RuvB(12)-Holliday junction (HJ) complex. HJ DNA is sandwiched between 2 RuvA tetramers; dsDNA enters through RuvA and exits via RuvB. An RuvB hexamer assembles on each DNA strand where it exits the tetramer. Each RuvB hexamer is contacted by two RuvA subunits (via domain III) on 2 adjacent RuvB subunits; this complex drives branch migration. In the full resolvosome a probable DNA-RuvA(4)-RuvB(12)-RuvC(2) complex forms which resolves the HJ.

It localises to the cytoplasm. In terms of biological role, the RuvA-RuvB-RuvC complex processes Holliday junction (HJ) DNA during genetic recombination and DNA repair, while the RuvA-RuvB complex plays an important role in the rescue of blocked DNA replication forks via replication fork reversal (RFR). RuvA specifically binds to HJ cruciform DNA, conferring on it an open structure. The RuvB hexamer acts as an ATP-dependent pump, pulling dsDNA into and through the RuvAB complex. HJ branch migration allows RuvC to scan DNA until it finds its consensus sequence, where it cleaves and resolves the cruciform DNA. The polypeptide is Holliday junction branch migration complex subunit RuvA (Mycoplasma capricolum subsp. capricolum (strain California kid / ATCC 27343 / NCTC 10154)).